An 87-amino-acid chain; its full sequence is UPF0367 protein SynWH7803_2240 (87 aa).

This sequence belongs to the UPF0367 family.

The sequence is that of UPF0367 protein SynWH7803_2240 from Synechococcus sp. (strain WH7803).